The following is a 474-amino-acid chain: tRNA-2-methylthio-N(6)-dimethylallyladenosine synthase (474 aa).

An MTTase N-terminal domain is found at 3–120 (KKLHIKTWGC…LPDMIEQVRR (118 aa)). [4Fe-4S] cluster contacts are provided by Cys12, Cys49, Cys83, Cys157, Cys161, and Cys164. Residues 143 to 375 (RAEGPTAFVS…QDRITQQAMR (233 aa)) enclose the Radical SAM core domain. In terms of domain architecture, TRAM spans 378–441 (RHMMGTVQRI…TNSLRGKFIR (64 aa)).

It belongs to the methylthiotransferase family. MiaB subfamily. Monomer. The cofactor is [4Fe-4S] cluster.

The protein resides in the cytoplasm. It catalyses the reaction N(6)-dimethylallyladenosine(37) in tRNA + (sulfur carrier)-SH + AH2 + 2 S-adenosyl-L-methionine = 2-methylsulfanyl-N(6)-dimethylallyladenosine(37) in tRNA + (sulfur carrier)-H + 5'-deoxyadenosine + L-methionine + A + S-adenosyl-L-homocysteine + 2 H(+). Catalyzes the methylthiolation of N6-(dimethylallyl)adenosine (i(6)A), leading to the formation of 2-methylthio-N6-(dimethylallyl)adenosine (ms(2)i(6)A) at position 37 in tRNAs that read codons beginning with uridine. The sequence is that of tRNA-2-methylthio-N(6)-dimethylallyladenosine synthase from Shewanella putrefaciens (strain CN-32 / ATCC BAA-453).